The primary structure comprises 352 residues: uncharacterized protein (352 aa).

3 N-linked (GlcNAc...) asparagine glycosylation sites follow: N14, N52, and N70. Residues 41–73 (LSDYKKNKDTLNNSNNNINQPFENSNNFNNNSK) are disordered. Residues 50 to 72 (TLNNSNNNINQPFENSNNFNNNS) are compositionally biased toward low complexity. A helical transmembrane segment spans residues 131–151 (IIFKSSGLLITLLVLYLGTFF). Residues N165, N186, N192, N193, N203, and N289 are each glycosylated (N-linked (GlcNAc...) asparagine). Low complexity predominate over residues 193–213 (NSSNSNNNNINNSNNNNNNNN). Residues 193–219 (NSSNSNNNNINNSNNNNNNNNRILSPN) form a disordered region.

Its subcellular location is the membrane. This is an uncharacterized protein from Dictyostelium discoideum (Social amoeba).